Reading from the N-terminus, the 344-residue chain is Putative [LysW]-lysine/[LysW]-ornithine hydrolase (344 aa).

Residue His66 participates in Zn(2+) binding. The active site involves Asp68. Asp90 is a binding site for Zn(2+). The active-site Proton acceptor is Glu117. Residues Glu118, Glu139, and His297 each coordinate Zn(2+).

This sequence belongs to the peptidase M20A family. LysK subfamily. The cofactor is Zn(2+). Co(2+) serves as cofactor.

The protein localises to the cytoplasm. The enzyme catalyses [amino-group carrier protein]-C-terminal-gamma-(L-lysyl)-L-glutamate + H2O = [amino-group carrier protein]-C-terminal-L-glutamate + L-lysine. The catalysed reaction is [amino-group carrier protein]-C-terminal-gamma-(L-ornithyl)-L-glutamate + H2O = [amino-group carrier protein]-C-terminal-L-glutamate + L-ornithine. Its pathway is amino-acid biosynthesis; L-lysine biosynthesis via AAA pathway; L-lysine from L-alpha-aminoadipate (Thermus route): step 5/5. The protein operates within amino-acid biosynthesis; L-arginine biosynthesis. In terms of biological role, catalyzes the release of L-lysine from [LysW]-gamma-L-lysine and the release of L-ornithine from [LysW]-L-ornithine. This is Putative [LysW]-lysine/[LysW]-ornithine hydrolase from Thermococcus kodakarensis (strain ATCC BAA-918 / JCM 12380 / KOD1) (Pyrococcus kodakaraensis (strain KOD1)).